The primary structure comprises 375 residues: Histidine biosynthesis bifunctional protein HisB (375 aa).

The segment at 1–168 is histidinol-phosphatase; that stretch reads MTPIVFIDRD…GIAHTLADAP (168 aa). Asp-8 acts as the Nucleophile in catalysis. Residues Asp-8, Asp-10, and Asp-128 each coordinate Mg(2+). The active-site Proton donor is the Asp-10. Residues 169–375 form an imidazoleglycerol-phosphate dehydratase region; that stretch reads RRAVVQRHTK…HVLPSTKGAL (207 aa).

In the N-terminal section; belongs to the histidinol-phosphatase family. This sequence in the C-terminal section; belongs to the imidazoleglycerol-phosphate dehydratase family. The cofactor is Mg(2+).

It localises to the cytoplasm. It carries out the reaction D-erythro-1-(imidazol-4-yl)glycerol 3-phosphate = 3-(imidazol-4-yl)-2-oxopropyl phosphate + H2O. The catalysed reaction is L-histidinol phosphate + H2O = L-histidinol + phosphate. It functions in the pathway amino-acid biosynthesis; L-histidine biosynthesis; L-histidine from 5-phospho-alpha-D-ribose 1-diphosphate: step 6/9. Its pathway is amino-acid biosynthesis; L-histidine biosynthesis; L-histidine from 5-phospho-alpha-D-ribose 1-diphosphate: step 8/9. The polypeptide is Histidine biosynthesis bifunctional protein HisB (Xylella fastidiosa (strain Temecula1 / ATCC 700964)).